The chain runs to 150 residues: uncharacterized protein (150 aa).

The Rhodanese domain maps to 19 to 93 (GAQDYVLVDV…SSKRLALRES (75 aa)).

This is an uncharacterized protein from Synechococcus elongatus.